Here is a 240-residue protein sequence, read N- to C-terminus: UDP-2,3-diacylglucosamine hydrolase (240 aa).

Asp-9, His-11, Asp-43, Asn-81, and His-116 together coordinate Mn(2+). 81–82 (NR) provides a ligand contact to substrate. Asp-124, Ser-162, Lys-166, Lys-169, and His-197 together coordinate substrate. Mn(2+)-binding residues include His-197 and His-199.

This sequence belongs to the LpxH family. Mn(2+) is required as a cofactor.

The protein resides in the cell inner membrane. The enzyme catalyses UDP-2-N,3-O-bis[(3R)-3-hydroxytetradecanoyl]-alpha-D-glucosamine + H2O = 2-N,3-O-bis[(3R)-3-hydroxytetradecanoyl]-alpha-D-glucosaminyl 1-phosphate + UMP + 2 H(+). It functions in the pathway glycolipid biosynthesis; lipid IV(A) biosynthesis; lipid IV(A) from (3R)-3-hydroxytetradecanoyl-[acyl-carrier-protein] and UDP-N-acetyl-alpha-D-glucosamine: step 4/6. Hydrolyzes the pyrophosphate bond of UDP-2,3-diacylglucosamine to yield 2,3-diacylglucosamine 1-phosphate (lipid X) and UMP by catalyzing the attack of water at the alpha-P atom. Involved in the biosynthesis of lipid A, a phosphorylated glycolipid that anchors the lipopolysaccharide to the outer membrane of the cell. The sequence is that of UDP-2,3-diacylglucosamine hydrolase from Neisseria meningitidis serogroup C / serotype 2a (strain ATCC 700532 / DSM 15464 / FAM18).